Reading from the N-terminus, the 127-residue chain is UPF0102 protein ERGA_CDS_00540 (127 aa).

This sequence belongs to the UPF0102 family.

The chain is UPF0102 protein ERGA_CDS_00540 from Ehrlichia ruminantium (strain Gardel).